Here is a 350-residue protein sequence, read N- to C-terminus: Putative deoxyribonuclease-2 (350 aa).

It belongs to the DNase II family.

The polypeptide is Putative deoxyribonuclease-2 (Burkholderia pseudomallei (strain 1710b)).